Here is a 1129-residue protein sequence, read N- to C-terminus: Protein LANA1 (1129 aa).

Disordered stretches follow at residues 1–988 (MAPP…PVPY) and 1110–1129 (LPLTQPGENQGPGDSPQEMT). 2 stretches are compositionally biased toward basic and acidic residues: residues 28 to 41 (RSPERCDLGDDLHL) and 48 to 58 (VADSVDGRECG). The span at 85-104 (PVAPIPSPAPATPLPPPALL) shows a compositional bias: pro residues. Residues 139-156 (SPESSQRPPLSSPTGRPD) are compositionally biased toward polar residues. The segment covering 161–185 (MRPPPSQQTTPPHSPTTPPPEPPSK) has biased composition (pro residues). Residues 186–197 (SSPDSLAPSTLR) are compositionally biased toward low complexity. A compositionally biased stretch (polar residues) spans 207–217 (PQGPSTLNPIC). Over residues 263-275 (PISIGSSSPSEGS) the composition is skewed to low complexity. Composition is skewed to basic and acidic residues over residues 292 to 301 (EASKNEKECS) and 314 to 323 (EISKESQVDK). The segment covering 324 to 419 (DDNDNKDDEE…DKKEDEEDGG (96 aa)) has biased composition (acidic residues). Low complexity predominate over residues 431-471 (QQQQEPQQQEPQQQEPQQQEPQQQEPQQQEPQQQEPQQQEP). The span at 472-528 (QQREPQQREPQQREPQQREPQQREPQQREPQQREPQQREPQQREPQQREPQQREPQQ) shows a compositional bias: basic and acidic residues. The segment covering 529-596 (REPQQQEPQQ…QQQEPQQQDE (68 aa)) has biased composition (low complexity). Over residues 597–888 (QQQDEQQQDE…QELEEVEEQE (292 aa)) the composition is skewed to acidic residues. Residues 924–934 (THEQIASSPPG) are compositionally biased toward polar residues. A compositionally biased stretch (basic residues) spans 962–979 (PGVRMRRVPVTHPKKPHP). The segment at 1008–1129 (FLGKDGRRDP…GPGDSPQEMT (122 aa)) is DNA-binding domain.

Homooligomer. Interacts with host BRD2. Interacts with host RELA, ELOB, ELOC and CUL5; these interactions induce the proteasomal degradation of host RELA. Interacts with host TRIM28 and NFE2L2/NRF2; these interactions are essential for the shutdown of lytic gene expression during the early stage of infection. Interacts (via N-terminus) with host histones H2A and H2B; these interactions are essential to dock LANA1 onto chromosomes. Interacts with host BUB1 and PCNA. Interacts with host NAP1L1; this interaction is required for LANA1-dependent DNA replication. Interacts with components of the host MLL1 complex KMT2A and WDR5.

The protein resides in the host nucleus. In terms of biological role, multifunctional protein that plays a role in the replication and long-term persistence of the viral episomal genome in dividing cells. Binds to mitotic chromosomes via its N-terminal region and to a 16-bp imperfect palindrome within the origin of replication (oriP) located in the viral terminal repeat (TR) through its C-terminal. Tethers viral episomes to chromosomes during mitosis. Plays a critical role in the shutdown of lytic gene expression during the early stage of infection by interacting with host TRIM28. Also plays a role in the repression of host NF-kappa-B activity upon TNF-alpha stimulation by promoting the proteasomal degradation of host RELA. Promotes nuclear localization and cleavage of host STAT6 leading to constitutive activation of the IL13/STAT6 signaling pathway to promote viral latency. Interacts with and modulates the histone methyltransferase MLL1 complex activity, leading to its recruitment on viral DNA terminal repeats changing the dynamic of histone H3 methylated 'Lys-4'(H3K4me) profile during the initial hours following infection. The chain is Protein LANA1 (LANA1) from Homo sapiens (Human).